Consider the following 114-residue polypeptide: UPF0145 protein PF1756 (114 aa).

It belongs to the UPF0145 family.

This chain is UPF0145 protein PF1756, found in Pyrococcus furiosus (strain ATCC 43587 / DSM 3638 / JCM 8422 / Vc1).